The sequence spans 79 residues: Cyclin-dependent kinases regulatory subunit 2 (79 aa).

It belongs to the CKS family. In terms of assembly, forms a homohexamer that can probably bind six kinase subunits.

In terms of biological role, binds to the catalytic subunit of the cyclin dependent kinases and is essential for their biological function. This Xenopus laevis (African clawed frog) protein is Cyclin-dependent kinases regulatory subunit 2 (cks2).